The chain runs to 126 residues: Adult-specific rigid cuticular protein 12.4 (126 aa).

One can recognise a Chitin-binding type R&amp;R domain in the interval 9-87 (GGAYNFGFNT…AMAALAPKAP (79 aa)).

Its function is as follows. Component of the rigid cuticle of the spider. This Araneus diadematus (European garden spider) protein is Adult-specific rigid cuticular protein 12.4.